The chain runs to 145 residues: Flagellar assembly factor FliW (145 aa).

It belongs to the FliW family. Interacts with translational regulator CsrA and flagellin(s).

It is found in the cytoplasm. Its function is as follows. Acts as an anti-CsrA protein, binds CsrA and prevents it from repressing translation of its target genes, one of which is flagellin. Binds to flagellin and participates in the assembly of the flagellum. In Thermosipho africanus (strain TCF52B), this protein is Flagellar assembly factor FliW.